The chain runs to 640 residues: Threonine--tRNA ligase (640 aa).

Residues 1 to 61 (MPIITLPNGD…TEDATLQIIT (61 aa)) enclose the TGS domain. The catalytic stretch occupies residues 242-533 (DHRKIGKALD…LIEHYAGFMP (292 aa)). Zn(2+) contacts are provided by Cys333, His384, and His510.

Belongs to the class-II aminoacyl-tRNA synthetase family. Homodimer. Zn(2+) serves as cofactor.

The protein resides in the cytoplasm. It catalyses the reaction tRNA(Thr) + L-threonine + ATP = L-threonyl-tRNA(Thr) + AMP + diphosphate + H(+). Functionally, catalyzes the attachment of threonine to tRNA(Thr) in a two-step reaction: L-threonine is first activated by ATP to form Thr-AMP and then transferred to the acceptor end of tRNA(Thr). Also edits incorrectly charged L-seryl-tRNA(Thr). The protein is Threonine--tRNA ligase of Acinetobacter baylyi (strain ATCC 33305 / BD413 / ADP1).